Reading from the N-terminus, the 494-residue chain is Alpha-amylase-related protein (494 aa).

A signal peptide spans M1 to A20. Q21 carries the post-translational modification Pyrrolidone carboxylic acid. C48 and C104 are disulfide-bonded. 3 residues coordinate Ca(2+): N118, Q169, and D178. A disulfide bridge connects residues C157 and C171. A chloride-binding site is contributed by R206. The active-site Nucleophile is the D208. H212 contributes to the Ca(2+) binding site. E245 functions as the Proton donor in the catalytic mechanism. Chloride is bound by residues N308 and R343. 3 disulfides stabilise this stretch: C376–C382, C418–C441, and C448–C460.

This sequence belongs to the glycosyl hydrolase 13 family. As to quaternary structure, monomer. Ca(2+) is required as a cofactor. Chloride serves as cofactor.

It is found in the secreted. The enzyme catalyses Endohydrolysis of (1-&gt;4)-alpha-D-glucosidic linkages in polysaccharides containing three or more (1-&gt;4)-alpha-linked D-glucose units.. This is Alpha-amylase-related protein (Amyrel) from Drosophila ercepeae (Fruit fly).